The primary structure comprises 231 residues: GFP-like fluorescent chromoprotein FP506 (231 aa).

Positions 66-68 (NYG) form a cross-link, 5-imidazolinone (Asn-Gly). Tyrosine 67 is modified (2,3-didehydrotyrosine).

Belongs to the GFP family. Post-translationally, contains a chromophore consisting of modified amino acid residues. The chromophore is formed by autocatalytic backbone condensation between Xaa-N and Gly-(N+2), and oxidation of Tyr-(N+1) to didehydrotyrosine. Maturation of the chromophore requires nothing other than molecular oxygen. The precise stereochemistry of the tyrosine has not been determined. In terms of tissue distribution, tentacle and oral disk.

Its function is as follows. Pigment protein that is yellow-green in color. The protein is GFP-like fluorescent chromoprotein FP506 of Zoanthus sp. (Green polyp).